Reading from the N-terminus, the 71-residue chain is Small ribosomal subunit protein bS18 (71 aa).

The protein belongs to the bacterial ribosomal protein bS18 family. Part of the 30S ribosomal subunit. Forms a tight heterodimer with protein bS6.

Binds as a heterodimer with protein bS6 to the central domain of the 16S rRNA, where it helps stabilize the platform of the 30S subunit. This is Small ribosomal subunit protein bS18 from Acaryochloris marina (strain MBIC 11017).